Consider the following 372-residue polypeptide: Chaperone protein DnaJ (372 aa).

The J domain maps to 5-70; it reads DYYDLLEVSR…EKRAGYDRYG (66 aa). The CR-type zinc finger occupies 134–212; the sequence is GIQAPIHYVT…CGGSGRKRDE (79 aa). Zn(2+)-binding residues include C147, C150, C164, C167, C186, C189, C200, and C203. 4 CXXCXGXG motif repeats span residues 147–154, 164–171, 186–193, and 200–207; these read CNTCQGTG, CNTCQGSG, CTTCYGEG, and CKKCGGSG.

The protein belongs to the DnaJ family. As to quaternary structure, homodimer. The cofactor is Zn(2+).

The protein resides in the cytoplasm. Its function is as follows. Participates actively in the response to hyperosmotic and heat shock by preventing the aggregation of stress-denatured proteins and by disaggregating proteins, also in an autonomous, DnaK-independent fashion. Unfolded proteins bind initially to DnaJ; upon interaction with the DnaJ-bound protein, DnaK hydrolyzes its bound ATP, resulting in the formation of a stable complex. GrpE releases ADP from DnaK; ATP binding to DnaK triggers the release of the substrate protein, thus completing the reaction cycle. Several rounds of ATP-dependent interactions between DnaJ, DnaK and GrpE are required for fully efficient folding. Also involved, together with DnaK and GrpE, in the DNA replication of plasmids through activation of initiation proteins. The protein is Chaperone protein DnaJ of Wolbachia pipientis subsp. Culex pipiens (strain wPip).